Reading from the N-terminus, the 303-residue chain is Fe-S cluster assembly protein DRE2 (303 aa).

The N-terminal SAM-like domain stretch occupies residues Met1–Ala125. Positions Pro126–Leu188 are linker. The [2Fe-2S] cluster site is built by Cys202, Cys213, Cys216, and Cys218. The segment at Cys202–Cys218 is fe-S binding site A. [4Fe-4S] cluster-binding residues include Cys266, Cys269, Cys277, and Cys280. Short sequence motifs (cx2C motif) lie at residues Cys266–Cys269 and Cys277–Cys280. The tract at residues Cys266 to Cys280 is fe-S binding site B.

Belongs to the anamorsin family. Monomer. Interacts with TAH18. Interacts with MIA40. It depends on [2Fe-2S] cluster as a cofactor. [4Fe-4S] cluster serves as cofactor.

Its subcellular location is the cytoplasm. The protein resides in the mitochondrion intermembrane space. Component of the cytosolic iron-sulfur (Fe-S) protein assembly (CIA) machinery required for the maturation of extramitochondrial Fe-S proteins. Part of an electron transfer chain functioning in an early step of cytosolic Fe-S biogenesis, facilitating the de novo assembly of a [4Fe-4S] cluster on the scaffold complex CFD1-NBP35. Electrons are transferred to DRE2 from NADPH via the FAD- and FMN-containing protein TAH18. TAH18-DRE2 are also required for the assembly of the diferric tyrosyl radical cofactor of ribonucleotide reductase (RNR), probably by providing electrons for reduction during radical cofactor maturation in the catalytic small subunit RNR2. The chain is Fe-S cluster assembly protein DRE2 from Eremothecium gossypii (strain ATCC 10895 / CBS 109.51 / FGSC 9923 / NRRL Y-1056) (Yeast).